The chain runs to 122 residues: Basic phospholipase A2 homolog (122 aa).

Cystine bridges form between Cys-26-Cys-116, Cys-28-Cys-44, Cys-43-Cys-96, Cys-49-Cys-122, Cys-50-Cys-89, Cys-57-Cys-82, and Cys-75-Cys-87. Positions 106 to 117 (KKHRVTVKFLCK) are important for membrane-damaging activities in eukaryotes and bacteria; heparin-binding.

It belongs to the phospholipase A2 family. Group II subfamily. K49 sub-subfamily. As to quaternary structure, homodimer; non-covalently linked. In terms of tissue distribution, expressed by the venom gland.

Its subcellular location is the secreted. In terms of biological role, snake venom phospholipase A2 (PLA2) that has almost no phospholipase A2 activity. Is myotoxic. Displays edema-inducing activities. A model of myotoxic mechanism has been proposed: an apo Lys49-PLA2 is activated by the entrance of a hydrophobic molecule (e.g. fatty acid) at the hydrophobic channel of the protein leading to a reorientation of a monomer. This reorientation causes a transition between 'inactive' to 'active' states, causing alignment of C-terminal and membrane-docking sites (MDoS) side-by-side and putting the membrane-disruption sites (MDiS) in the same plane, exposed to solvent and in a symmetric position for both monomers. The MDoS region stabilizes the toxin on membrane by the interaction of charged residues with phospholipid head groups. Subsequently, the MDiS region destabilizes the membrane with penetration of hydrophobic residues. This insertion causes a disorganization of the membrane, allowing an uncontrolled influx of ions (i.e. calcium and sodium), and eventually triggering irreversible intracellular alterations and cell death. The sequence is that of Basic phospholipase A2 homolog from Protobothrops mucrosquamatus (Taiwan habu).